Reading from the N-terminus, the 428-residue chain is Cytochrome c biogenesis protein CcsB (428 aa).

3 consecutive transmembrane segments (helical) span residues Leu14–Ile34, Ser72–Arg92, and Ile162–Ser182.

The protein belongs to the Ccs1/CcsB family. In terms of assembly, may interact with CcsA.

The protein localises to the cellular thylakoid membrane. Required during biogenesis of c-type cytochromes (cytochrome c6 and cytochrome f) at the step of heme attachment. The polypeptide is Cytochrome c biogenesis protein CcsB (Prochlorococcus marinus (strain MIT 9312)).